The following is a 339-amino-acid chain: uncharacterized protein (339 aa).

Residues 1–24 are disordered; the sequence is IQPARRHTKNTNMAKHTTKGTGHS. A compositionally biased stretch (polar residues) spans 10–21; it reads NTNMAKHTTKGT.

It is found in the mitochondrion. This is an uncharacterized protein from Zea mays (Maize).